The primary structure comprises 81 residues: Photosystem I iron-sulfur center (81 aa).

4Fe-4S ferredoxin-type domains are found at residues 2–31 (SHSV…MIPW) and 39–68 (IASA…VRVY). Positions 11, 14, 17, 21, 48, 51, 54, and 58 each coordinate [4Fe-4S] cluster.

As to quaternary structure, the eukaryotic PSI reaction center is composed of at least 11 subunits. The cofactor is [4Fe-4S] cluster.

The protein resides in the plastid. Its subcellular location is the chloroplast thylakoid membrane. It carries out the reaction reduced [plastocyanin] + hnu + oxidized [2Fe-2S]-[ferredoxin] = oxidized [plastocyanin] + reduced [2Fe-2S]-[ferredoxin]. In terms of biological role, apoprotein for the two 4Fe-4S centers FA and FB of photosystem I (PSI); essential for photochemical activity. FB is the terminal electron acceptor of PSI, donating electrons to ferredoxin. The C-terminus interacts with PsaA/B/D and helps assemble the protein into the PSI complex. Required for binding of PsaD and PsaE to PSI. PSI is a plastocyanin-ferredoxin oxidoreductase, converting photonic excitation into a charge separation, which transfers an electron from the donor P700 chlorophyll pair to the spectroscopically characterized acceptors A0, A1, FX, FA and FB in turn. In Zea mays (Maize), this protein is Photosystem I iron-sulfur center.